A 160-amino-acid polypeptide reads, in one-letter code: SsrA-binding protein (160 aa).

Belongs to the SmpB family.

The protein resides in the cytoplasm. Its function is as follows. Required for rescue of stalled ribosomes mediated by trans-translation. Binds to transfer-messenger RNA (tmRNA), required for stable association of tmRNA with ribosomes. tmRNA and SmpB together mimic tRNA shape, replacing the anticodon stem-loop with SmpB. tmRNA is encoded by the ssrA gene; the 2 termini fold to resemble tRNA(Ala) and it encodes a 'tag peptide', a short internal open reading frame. During trans-translation Ala-aminoacylated tmRNA acts like a tRNA, entering the A-site of stalled ribosomes, displacing the stalled mRNA. The ribosome then switches to translate the ORF on the tmRNA; the nascent peptide is terminated with the 'tag peptide' encoded by the tmRNA and targeted for degradation. The ribosome is freed to recommence translation, which seems to be the essential function of trans-translation. The chain is SsrA-binding protein from Haemophilus ducreyi (strain 35000HP / ATCC 700724).